A 495-amino-acid chain; its full sequence is Alkaline protease 2 (495 aa).

An N-terminal signal peptide occupies residues 1 to 16 (MKGYLSLSILPLLVAA). The propeptide occupies 17–136 (SPVVVDSIHN…IEKDSEVHTM (120 aa)). Positions 43 to 136 (SYIVVFKKHV…IEKDSEVHTM (94 aa)) constitute an Inhibitor I9 domain. The region spanning 146–452 (PWGLARISHR…GGSSNYTDII (307 aa)) is the Peptidase S8 domain. Active-site charge relay system residues include Asp-182 and His-214. Asn-284 is a glycosylation site (N-linked (GlcNAc...) asparagine). Catalysis depends on Ser-380, which acts as the Charge relay system. Residues Asn-447 and Asn-460 are each glycosylated (N-linked (GlcNAc...) asparagine).

It belongs to the peptidase S8 family.

The catalysed reaction is Hydrolysis of proteins with broad specificity, and of Bz-Arg-OEt &gt; Ac-Tyr-OEt. Does not hydrolyze peptide amides.. Alkaline protease that allows assimilation of proteinaceous substrates. Acts as a significant virulence factor in invasive aspergillosis. Required for regular sporulation. This Aspergillus fumigatus (strain CBS 144.89 / FGSC A1163 / CEA10) (Neosartorya fumigata) protein is Alkaline protease 2 (alp2).